The sequence spans 381 residues: MAGGFRPYDQDSCPNLTNSEAPEFSMSVVCKTEPHYFHPQTAILPSVQYSHPYHHYLSQFAPNFVPYYYRLLSRPIMKQEEMDIENYINYEVAAQQTMMRQRTLKPLGQLQIQMPPPIIVNQPVKPVPVKAVPVRRSSPPKRRVINAQLVAVATASGGIKNIEPRVEPLPRLEESFKQQVAKIQKSQHHYEQLFGRLTSMLKTLNQRYDNDAEDVPAPPSKRPRHMSTSSSESHIPDTASEKDEKDTLVQYPHRVQKEDGSAVYVLGPNGTQITAHQYGEVFWTNAPVATRCLLCVVFSSDELATHTLTGKPSPAFYGRERPPKLQLDQRKVDDIVVCVRNRTGGKERVIRATITTKCADTAKKYKRRAKKAQKVAIKEEY.

The interval 210–245 (NDAEDVPAPPSKRPRHMSTSSSESHIPDTASEKDEK) is disordered. One can recognise a BEN domain in the interval 268–365 (PNGTQITAHQ…TKCADTAKKY (98 aa)).

In terms of assembly, the heterotrimeric Elba complex consists of Elba1, Elba2 and Elba3.

The protein resides in the nucleus. Functionally, the heterotrimeric Elba complex is required for chromatin domain boundary function during early embryogenesis. It binds to a 8-bp sequence 5'-CCAATAAG-3' in the Fab-7 insulator or boundary element in the bithorax complex and contributes to its insulator or boundary activity. Elba2 can act as a transcriptional repressor and binds the palindromic sequence 5'-CCAATTGG-3' to mediate transcriptional repression. This chain is Early boundary activity protein 2, found in Drosophila melanogaster (Fruit fly).